Here is a 484-residue protein sequence, read N- to C-terminus: Poly(A) RNA polymerase GLD2 (484 aa).

2 positions are modified to phosphoserine: serine 62 and serine 69. Residues 76–92 carry the Nuclear localization signal motif; that stretch reads KRISDEKAFPLDGKRQR. A Phosphoserine modification is found at serine 95. Mg(2+)-binding residues include aspartate 213 and aspartate 215. Positions 386–440 constitute a PAP-associated domain; the sequence is SLGDLLLGFLKYYATEFDWNTQMISVREAKAIPRPDDMEWRNKYICVEEPFDGTN.

This sequence belongs to the DNA polymerase type-B-like family. GLD2 subfamily. Interacts with CPEB1, CPEB2, CPSF1 and PABPC1. Interacts with QKI isoform QKI7; promoting recruitment to miRNA miR-122 and miR-122 stabilization. Requires Mg(2+) as cofactor. It depends on Mn(2+) as a cofactor. Ubiquitous. In brain, it is highly expressed in the cerebral cortex, cerebellum, hippocampus and olfactory bulb.

Its subcellular location is the cytoplasm. The protein localises to the nucleus. The enzyme catalyses RNA(n) + ATP = RNA(n)-3'-adenine ribonucleotide + diphosphate. Functionally, cytoplasmic poly(A) RNA polymerase that adds successive AMP monomers to the 3'-end of specific RNAs, forming a poly(A) tail. In contrast to the canonical nuclear poly(A) RNA polymerase, it only adds poly(A) to selected cytoplasmic mRNAs. Does not play a role in replication-dependent histone mRNA degradation. Adds a single nucleotide to the 3' end of specific miRNAs, monoadenylation stabilizes and prolongs the activity of some but not all miRNAs. This chain is Poly(A) RNA polymerase GLD2 (Tent2), found in Mus musculus (Mouse).